We begin with the raw amino-acid sequence, 315 residues long: DNA-directed RNA polymerase subunit alpha (315 aa).

The tract at residues Met-1–Thr-228 is alpha N-terminal domain (alpha-NTD). Positions Lys-245–Glu-315 are alpha C-terminal domain (alpha-CTD).

This sequence belongs to the RNA polymerase alpha chain family. As to quaternary structure, homodimer. The RNAP catalytic core consists of 2 alpha, 1 beta, 1 beta' and 1 omega subunit. When a sigma factor is associated with the core the holoenzyme is formed, which can initiate transcription.

It catalyses the reaction RNA(n) + a ribonucleoside 5'-triphosphate = RNA(n+1) + diphosphate. Its function is as follows. DNA-dependent RNA polymerase catalyzes the transcription of DNA into RNA using the four ribonucleoside triphosphates as substrates. The protein is DNA-directed RNA polymerase subunit alpha of Clostridium tetani (strain Massachusetts / E88).